A 324-amino-acid chain; its full sequence is dITP/XTP pyrophosphatase (324 aa).

Residues 1–127 are unknown; sequence MTKTIFESKT…KNDNNFGDTI (127 aa). Positions 128 to 324 are NTP pyrophosphatase; it reads LIATHNEGKT…EVFPKWQLEN (197 aa). Position 131–136 (131–136) interacts with substrate; sequence THNEGK. Mg(2+) contacts are provided by Glu-164 and Asp-193. Asp-193 (proton acceptor) is an active-site residue. Substrate contacts are provided by residues Ser-194, 277–280, Lys-300, and 305–306; these read FGYD and HR.

This sequence belongs to the HAM1 NTPase family. In terms of assembly, homodimer. Mg(2+) is required as a cofactor.

It catalyses the reaction XTP + H2O = XMP + diphosphate + H(+). It carries out the reaction dITP + H2O = dIMP + diphosphate + H(+). The catalysed reaction is ITP + H2O = IMP + diphosphate + H(+). Its function is as follows. Pyrophosphatase that catalyzes the hydrolysis of nucleoside triphosphates to their monophosphate derivatives, with a high preference for the non-canonical purine nucleotides XTP (xanthosine triphosphate), dITP (deoxyinosine triphosphate) and ITP. Seems to function as a house-cleaning enzyme that removes non-canonical purine nucleotides from the nucleotide pool, thus preventing their incorporation into DNA/RNA and avoiding chromosomal lesions. This is dITP/XTP pyrophosphatase from Streptococcus agalactiae serotype III (strain NEM316).